The primary structure comprises 76 residues: UPF0346 protein LBA0976 (76 aa).

Belongs to the UPF0346 family.

The chain is UPF0346 protein LBA0976 from Lactobacillus acidophilus (strain ATCC 700396 / NCK56 / N2 / NCFM).